The following is a 409-amino-acid chain: Pentatricopeptide repeat-containing protein At1g31790 (409 aa).

9 PPR repeats span residues 87–121, 122–152, 153–187, 192–226, 229–259, 260–294, 295–330, 331–361, and 363–397; these read NEDIYSCLAKESARENDQRGAHELQVHIMKSSIRP, TITFINRLLLMHVSCGRLDITRQMFDRMPHR, DFHSWAIVFLGCIEMGDYEDAAFLFVSMLKHSQKG, PSWILGCVLKACAMIRDFELGKQVHALCHKLGFID, DSYLSGSLIRFYGEFRCLEDANLVLHQLSNA, NTVAWAAKVTNDYREGEFQEVIRDFIEMGNHGIKK, NVSVFSNVLKACSWVSDGGRSGQQVHANAIKLGFES, DCLIRCRLIEMYGKYGKVKDAEKVFKSSKDE, and SVSCWNAMVASYMQNGIYIEAIKLLYQMKATGIKA.

This sequence belongs to the PPR family. PCMP-A subfamily.

The chain is Pentatricopeptide repeat-containing protein At1g31790 (PCMP-A1) from Arabidopsis thaliana (Mouse-ear cress).